Consider the following 441-residue polypeptide: Ribulose bisphosphate carboxylase/oxygenase activase, chloroplastic (441 aa).

Residue 167 to 174 (VWGGKGQG) participates in ATP binding.

It belongs to the RuBisCO activase family.

It localises to the plastid. The protein localises to the chloroplast stroma. Activation of RuBisCO (ribulose-1,5-bisphosphate carboxylase/oxygenase; EC 4.1.1.39) involves the ATP-dependent carboxylation of the epsilon-amino group of lysine leading to a carbamate structure. The chain is Ribulose bisphosphate carboxylase/oxygenase activase, chloroplastic (RCA1) from Phaseolus vulgaris (Kidney bean).